The primary structure comprises 126 residues: uncharacterized protein (126 aa).

The helical transmembrane segment at 48 to 68 threads the bilayer; sequence ILCMFPWQCVVYVFSNFVWLV.

Its subcellular location is the membrane. This is an uncharacterized protein from Homo sapiens (Human).